The primary structure comprises 448 residues: Trigger factor (448 aa).

In terms of domain architecture, PPIase FKBP-type spans G167–P253.

This sequence belongs to the FKBP-type PPIase family. Tig subfamily.

The protein resides in the cytoplasm. The catalysed reaction is [protein]-peptidylproline (omega=180) = [protein]-peptidylproline (omega=0). Functionally, involved in protein export. Acts as a chaperone by maintaining the newly synthesized protein in an open conformation. Functions as a peptidyl-prolyl cis-trans isomerase. The polypeptide is Trigger factor (Borrelia duttonii (strain Ly)).